The following is a 700-amino-acid chain: Calpain-2 catalytic subunit (700 aa).

At alanine 2 the chain carries N-acetylalanine. Residues 2–19 (AGIAAKLAKDREAAEGLG) constitute a propeptide, anchors to the small subunit. The region spanning 45-344 (LFQDPSFPAL…YSRLEICNLT (300 aa)) is the Calpain catalytic domain. Ca(2+) is bound by residues glycine 91 and aspartate 96. The active site involves cysteine 105. Residues glutamate 175, glutamine 229, and lysine 230 each contribute to the Ca(2+) site. Catalysis depends on residues histidine 262 and asparagine 286. Ca(2+) contacts are provided by glutamate 292, aspartate 299, and glutamate 323. The domain III stretch occupies residues 345 to 514 (PDTLTSDSYK…KKADYQVVDD (170 aa)). A linker region spans residues 515-529 (EIEANIDEIDISEDD). A domain IV region spans residues 530–700 (IDDGFRRLFA…LISWLSFSVL (171 aa)). Residues alanine 542, aspartate 545, glutamate 547, glutamate 552, aspartate 585, aspartate 587, serine 589, lysine 591, glutamate 596, aspartate 615, aspartate 617, serine 619, threonine 621, glutamate 626, aspartate 658, and asparagine 661 each contribute to the Ca(2+) site. EF-hand domains are found at residues 572 to 597 (FSIETCKIMVDMLDSDGSGKLGLKEF), 602 to 637 (TKIQKYQKIYREIDVDRSGTMNSYEMRKALEEAGFK), and 652 to 672 (DDDLIIDFDNFVRCLIRLETL).

Belongs to the peptidase C2 family. As to quaternary structure, forms a heterodimer with a small (regulatory) subunit (CAPNS1). Interacts with CPEB3; this leads to cleavage of CPEB3. The cofactor is Ca(2+). In terms of tissue distribution, ubiquitous.

Its subcellular location is the cytoplasm. It is found in the cell membrane. The catalysed reaction is Broad endopeptidase specificity.. With respect to regulation, activated by 200-1000 micromolar concentrations of calcium and inhibited by calpastatin. Its function is as follows. Calcium-regulated non-lysosomal thiol-protease which catalyzes limited proteolysis of substrates involved in cytoskeletal remodeling and signal transduction. Proteolytically cleaves MYOC at 'Arg-226'. Proteolytically cleaves CPEB3 following neuronal stimulation which abolishes CPEB3 translational repressor activity, leading to translation of CPEB3 target mRNAs. This chain is Calpain-2 catalytic subunit (CAPN2), found in Bos taurus (Bovine).